Here is a 398-residue protein sequence, read N- to C-terminus: Mitogen-activated protein kinase 1 (398 aa).

A disordered region spans residues 1–26; sequence MDAGAQPPDTEMAEAGGGQQPPAAAA. The Protein kinase domain maps to 67–352; sequence KPPILPIGKG…VEGALAHPYL (286 aa). Residues 73 to 81 and Lys96 contribute to the ATP site; that span reads IGKGAYGIV. Asp193 functions as the Proton acceptor in the catalytic mechanism. Thr225 bears the Phosphothreonine mark. Positions 225–227 match the TXY motif; sequence TEY. Tyr227 bears the Phosphotyrosine mark.

This sequence belongs to the protein kinase superfamily. CMGC Ser/Thr protein kinase family. MAP kinase subfamily. In terms of assembly, may interact with RAC1. In terms of processing, dually phosphorylated on Thr-225 and Tyr-227, which activates the enzyme.

It catalyses the reaction L-seryl-[protein] + ATP = O-phospho-L-seryl-[protein] + ADP + H(+). The catalysed reaction is L-threonyl-[protein] + ATP = O-phospho-L-threonyl-[protein] + ADP + H(+). Activated by threonine and tyrosine phosphorylation. Activated in response to sphingolipid elicitor (SE). In terms of biological role, involved in sphingolipid elicitor (SE)-dependent defense signaling pathway. Acts downstream of heterotrimeric G protein alpha subunit and small GTPase RAC1. May regulate the expression of various genes involved in biotic and abiotic stress response. Involved in an abscisic acid signaling pathway that regulates the activities of antioxidant enzymes and the production of hydrogen peroxide. Acts downstream of CCAMK. In Oryza sativa subsp. japonica (Rice), this protein is Mitogen-activated protein kinase 1 (MPK1).